A 191-amino-acid chain; its full sequence is Cytochrome c oxidase assembly protein CtaG (191 aa).

Over 1-9 (MALNGPQKT) the chain is Cytoplasmic. Residues 10–30 (VVQLVSVVVVMGGLAWASVPF) form a helical; Signal-anchor for type II membrane protein membrane-spanning segment. Residues 31 to 191 (YDWFCRVTGF…LDAGEKTNTN (161 aa)) are Periplasmic-facing.

The protein belongs to the COX11/CtaG family.

Its subcellular location is the cell inner membrane. Its function is as follows. Exerts its effect at some terminal stage of cytochrome c oxidase synthesis, probably by being involved in the insertion of the copper B into subunit I. The sequence is that of Cytochrome c oxidase assembly protein CtaG from Ruegeria pomeroyi (strain ATCC 700808 / DSM 15171 / DSS-3) (Silicibacter pomeroyi).